The sequence spans 142 residues: Dromaiocalcin-1 (142 aa).

3 cysteine pairs are disulfide-bonded: Cys-13/Cys-24, Cys-41/Cys-138, and Cys-113/Cys-130. One can recognise a C-type lectin domain in the interval 20–139; sequence FRGNCYGYFR…CGERNAFICK (120 aa).

The protein resides in the secreted. The protein localises to the extracellular space. It localises to the extracellular matrix. This Dromaius novaehollandiae (Emu) protein is Dromaiocalcin-1.